The primary structure comprises 301 residues: Protoheme IX farnesyltransferase (301 aa).

Helical transmembrane passes span phenylalanine 20 to leucine 42, valine 55 to phenylalanine 75, alanine 105 to tryptophan 125, glutamine 126 to alanine 146, leucine 150 to valine 172, phenylalanine 176 to isoleucine 198, methionine 227 to valine 247, valine 249 to methionine 269, and phenylalanine 280 to phenylalanine 300.

The protein belongs to the UbiA prenyltransferase family. Protoheme IX farnesyltransferase subfamily. In terms of assembly, interacts with CtaA.

The protein localises to the cell membrane. It carries out the reaction heme b + (2E,6E)-farnesyl diphosphate + H2O = Fe(II)-heme o + diphosphate. It functions in the pathway porphyrin-containing compound metabolism; heme O biosynthesis; heme O from protoheme: step 1/1. Its function is as follows. Converts heme B (protoheme IX) to heme O by substitution of the vinyl group on carbon 2 of heme B porphyrin ring with a hydroxyethyl farnesyl side group. The chain is Protoheme IX farnesyltransferase from Listeria monocytogenes serotype 4b (strain CLIP80459).